Here is a 943-residue protein sequence, read N- to C-terminus: Lysine-specific demethylase JMJ21 (943 aa).

Residues 14–60 (LGSLSVLPDETICVLLEYLAPRDIAHLACVSSVMYILCNEEPLWMSL) form the F-box domain. The region spanning 216-379 (EAAPELLKDY…FVCLDMAPGY (164 aa)) is the JmjC domain. Residues histidine 262, aspartate 264, and histidine 347 each contribute to the Fe cation site. Over residues 396–410 (NSEDLEEETHDEEDN) the composition is skewed to acidic residues. The disordered stretch occupies residues 396-438 (NSEDLEEETHDEEDNTLSYSDLTRKEKRTRMNGGGETENREED).

It belongs to the JARID1 histone demethylase family. Fe(2+) is required as a cofactor. In terms of tissue distribution, mostly expressed in leaves, and, to a lower extent, in inflorescences, roots, siliques and stems.

The protein localises to the nucleus. May function as histone H3 lysine demethylase and be involved in regulation of gene expression. The protein is Lysine-specific demethylase JMJ21 of Arabidopsis thaliana (Mouse-ear cress).